The chain runs to 150 residues: Transcriptional repressor NrdR (150 aa).

Residues 1-26 (MKCPFCGNSDSKVVDSRPDKGGSGIR) form a disordered region. The segment at 3-34 (CPFCGNSDSKVVDSRPDKGGSGIRRRRECEQC) is a zinc-finger region. Positions 49–139 (PLVLKKDGRR…VYRSFRDINE (91 aa)) constitute an ATP-cone domain.

It belongs to the NrdR family. Zn(2+) serves as cofactor.

Functionally, negatively regulates transcription of bacterial ribonucleotide reductase nrd genes and operons by binding to NrdR-boxes. This is Transcriptional repressor NrdR from Pelobacter propionicus (strain DSM 2379 / NBRC 103807 / OttBd1).